A 508-amino-acid polypeptide reads, in one-letter code: Photosystem II CP47 reaction center protein (508 aa).

6 helical membrane-spanning segments follow: residues 21 to 36 (AVHIMHTALVAGWAGS), 101 to 115 (IVFSGLCFLAAIWHW), 140 to 156 (GIHLFLSGVACFGFGTF), 203 to 218 (IAAGTLGILAGLFHLS), 237 to 252 (VLSSSIAAVFFAAFVV), and 457 to 472 (SFALLFFFGHIWHGAR).

It belongs to the PsbB/PsbC family. PsbB subfamily. As to quaternary structure, PSII is composed of 1 copy each of membrane proteins PsbA, PsbB, PsbC, PsbD, PsbE, PsbF, PsbH, PsbI, PsbJ, PsbK, PsbL, PsbM, PsbT, PsbX, PsbY, PsbZ, Psb30/Ycf12, at least 3 peripheral proteins of the oxygen-evolving complex and a large number of cofactors. It forms dimeric complexes. Binds multiple chlorophylls. PSII binds additional chlorophylls, carotenoids and specific lipids. serves as cofactor.

The protein localises to the plastid. It localises to the chloroplast thylakoid membrane. In terms of biological role, one of the components of the core complex of photosystem II (PSII). It binds chlorophyll and helps catalyze the primary light-induced photochemical processes of PSII. PSII is a light-driven water:plastoquinone oxidoreductase, using light energy to abstract electrons from H(2)O, generating O(2) and a proton gradient subsequently used for ATP formation. The chain is Photosystem II CP47 reaction center protein from Citrus sinensis (Sweet orange).